A 484-amino-acid chain; its full sequence is MEKSWFNLMFSKGELEYRGELSKAMDSFAPSEKTTISKNRFIYDMDKNFYGWGERSSYSKNVDLLVSSKDIRNFISDDTFFVRDSNKNSYSIYFDIKKKFFEIDNDFSDLEFFFYSYCSSSYLNNSSKGDNDLHYDSYIKDTKYNCTNYIKSCIDSYFRSYICIDSNFLSDSNNSNESYIYNFICSESGKIRESKNYKIRTNRNRSNLISSKDFDITQNYNQLWIQCDNCYGLMYKKVKMNVCEQCGHYLKMMSSERIELSIDPGTWNPMDEDMVSADPIKFHSKEEPYKNRIDSAQKTTGLTDAVQTGTGQLNGIPVALGVMDFQFMGGSMGSVVGEKITRLIEYATNQRLPLILVCSSGGARMQEGSLSLMQMAKISSVLCDYQSSKKLFYISILTSPTTGGVTASFGMLGDIIIAEPYAYIAFAGKRVIEQTLKKAVPEGSQAAESLLRKGLLDAIVPRNLLKGVLSELFQLHAFFPLNKN.

In terms of domain architecture, CoA carboxyltransferase N-terminal spans 223–484 (LWIQCDNCYG…LHAFFPLNKN (262 aa)). Zn(2+) is bound by residues C227, C230, C243, and C246. Residues 227 to 246 (CDNCYGLMYKKVKMNVCEQC) form a C4-type zinc finger.

The protein belongs to the AccD/PCCB family. Acetyl-CoA carboxylase is a heterohexamer composed of biotin carboxyl carrier protein, biotin carboxylase and 2 subunits each of ACCase subunit alpha and ACCase plastid-coded subunit beta (accD). Zn(2+) is required as a cofactor.

Its subcellular location is the plastid. It is found in the chloroplast stroma. The catalysed reaction is N(6)-carboxybiotinyl-L-lysyl-[protein] + acetyl-CoA = N(6)-biotinyl-L-lysyl-[protein] + malonyl-CoA. It participates in lipid metabolism; malonyl-CoA biosynthesis; malonyl-CoA from acetyl-CoA: step 1/1. In terms of biological role, component of the acetyl coenzyme A carboxylase (ACC) complex. Biotin carboxylase (BC) catalyzes the carboxylation of biotin on its carrier protein (BCCP) and then the CO(2) group is transferred by the transcarboxylase to acetyl-CoA to form malonyl-CoA. This chain is Acetyl-coenzyme A carboxylase carboxyl transferase subunit beta, chloroplastic, found in Olimarabidopsis pumila (Dwarf rocket).